A 274-amino-acid chain; its full sequence is Membrane protein insertase YidC 2 (274 aa).

A signal peptide spans 1 to 20; that stretch reads MKKKLKLTSLLGLSLLIMTA. Residue C21 is the site of N-palmitoyl cysteine attachment. The S-diacylglycerol cysteine moiety is linked to residue C21. The next 4 membrane-spanning stretches (helical) occupy residues 56–76, 128–148, 167–187, and 205–225; these read ISIGVGIILFTVLIRTVLLPV, SDSLWPILIQMPVILALFQAL, VDTTLVLPILAAVFTFLSTWL, and GIPVLIFIFAVYAPGGVALYW.

The protein belongs to the OXA1/ALB3/YidC family. Type 2 subfamily.

The protein resides in the cell membrane. In terms of biological role, required for the insertion and/or proper folding and/or complex formation of integral membrane proteins into the membrane. Involved in integration of membrane proteins that insert both dependently and independently of the Sec translocase complex, as well as at least some lipoproteins. The chain is Membrane protein insertase YidC 2 from Streptococcus pneumoniae serotype 4 (strain ATCC BAA-334 / TIGR4).